Reading from the N-terminus, the 209-residue chain is Uracil phosphoribosyltransferase (209 aa).

5-phospho-alpha-D-ribose 1-diphosphate is bound by residues arginine 79, arginine 104, and 131–139 (DPMLATGGS). Residues isoleucine 194 and 199–201 (GDA) contribute to the uracil site. Aspartate 200 is a binding site for 5-phospho-alpha-D-ribose 1-diphosphate.

This sequence belongs to the UPRTase family. Requires Mg(2+) as cofactor.

It carries out the reaction UMP + diphosphate = 5-phospho-alpha-D-ribose 1-diphosphate + uracil. The protein operates within pyrimidine metabolism; UMP biosynthesis via salvage pathway; UMP from uracil: step 1/1. Allosterically activated by GTP. Catalyzes the conversion of uracil and 5-phospho-alpha-D-ribose 1-diphosphate (PRPP) to UMP and diphosphate. The sequence is that of Uracil phosphoribosyltransferase from Clostridium tetani (strain Massachusetts / E88).